Consider the following 156-residue polypeptide: Ribosomal RNA large subunit methyltransferase H (156 aa).

S-adenosyl-L-methionine is bound by residues L73, G104, and 123 to 128 (LSALTL).

The protein belongs to the RNA methyltransferase RlmH family. Homodimer.

It is found in the cytoplasm. It catalyses the reaction pseudouridine(1915) in 23S rRNA + S-adenosyl-L-methionine = N(3)-methylpseudouridine(1915) in 23S rRNA + S-adenosyl-L-homocysteine + H(+). Functionally, specifically methylates the pseudouridine at position 1915 (m3Psi1915) in 23S rRNA. The chain is Ribosomal RNA large subunit methyltransferase H from Shewanella frigidimarina (strain NCIMB 400).